The primary structure comprises 208 residues: MKPICVVLSGAGISAESGIPTYRAEDGLWAGHKIEDVCTPEALQRNRKQVLAFYNERRRNCAEAKPNAAHKVLVELERSYNVQIITQNVEDLHERAGSTNVLHLHGELTKARSSFDPDYIVPCMGDQSVNDKDPNGHPMRPHIVFFGESVPVLEPAIDLVSQADIVLVIGTSLQVYPANGLVNEAPKNAQIYLIDPNPNTGFNPVTGW.

One can recognise a Deacetylase sirtuin-type domain in the interval methionine 1–tryptophan 208. NAD(+) is bound at residue glycine 10–tryptophan 29. Residues tyrosine 54 and arginine 57 each contribute to the substrate site. Glutamine 87–glutamate 90 serves as a coordination point for NAD(+). The Proton acceptor role is filled by histidine 105. NAD(+) contacts are provided by residues glycine 170–serine 172 and asparagine 197–asparagine 199.

It belongs to the sirtuin family. Class III subfamily.

The protein localises to the cytoplasm. It catalyses the reaction N(6)-acetyl-L-lysyl-[protein] + NAD(+) + H2O = 2''-O-acetyl-ADP-D-ribose + nicotinamide + L-lysyl-[protein]. It carries out the reaction N(6)-succinyl-L-lysyl-[protein] + NAD(+) + H2O = 2''-O-succinyl-ADP-D-ribose + nicotinamide + L-lysyl-[protein]. Functionally, NAD-dependent lysine deacetylase and desuccinylase that specifically removes acetyl and succinyl groups on target proteins. Modulates the activities of several proteins which are inactive in their acylated form. This is NAD-dependent protein deacylase from Aggregatibacter actinomycetemcomitans (Actinobacillus actinomycetemcomitans).